The chain runs to 259 residues: 4-hydroxy-tetrahydrodipicolinate reductase (259 aa).

NAD(+) contacts are provided by residues 8-13 (GFKGRM), 93-95 (GTT), and 119-122 (APNF). H149 functions as the Proton donor/acceptor in the catalytic mechanism. H150 is a binding site for (S)-2,3,4,5-tetrahydrodipicolinate. Residue K153 is the Proton donor of the active site. 159 to 160 (GT) contacts (S)-2,3,4,5-tetrahydrodipicolinate.

Belongs to the DapB family.

It localises to the cytoplasm. The enzyme catalyses (S)-2,3,4,5-tetrahydrodipicolinate + NAD(+) + H2O = (2S,4S)-4-hydroxy-2,3,4,5-tetrahydrodipicolinate + NADH + H(+). The catalysed reaction is (S)-2,3,4,5-tetrahydrodipicolinate + NADP(+) + H2O = (2S,4S)-4-hydroxy-2,3,4,5-tetrahydrodipicolinate + NADPH + H(+). It participates in amino-acid biosynthesis; L-lysine biosynthesis via DAP pathway; (S)-tetrahydrodipicolinate from L-aspartate: step 4/4. Functionally, catalyzes the conversion of 4-hydroxy-tetrahydrodipicolinate (HTPA) to tetrahydrodipicolinate. The sequence is that of 4-hydroxy-tetrahydrodipicolinate reductase from Enterococcus faecalis (strain ATCC 700802 / V583).